Consider the following 370-residue polypeptide: Queuine tRNA-ribosyltransferase (370 aa).

Catalysis depends on Asp-89, which acts as the Proton acceptor. Substrate is bound by residues 89 to 93 (DSGGF), Asp-143, Gln-187, and Gly-214. The RNA binding stretch occupies residues 245-251 (GVGTPED). Asp-264 (nucleophile) is an active-site residue. An RNA binding; important for wobble base 34 recognition region spans residues 269–273 (TRNAR). Residues Cys-302, Cys-304, Cys-307, and His-333 each contribute to the Zn(2+) site.

It belongs to the queuine tRNA-ribosyltransferase family. In terms of assembly, homodimer. Within each dimer, one monomer is responsible for RNA recognition and catalysis, while the other monomer binds to the replacement base PreQ1. Requires Zn(2+) as cofactor.

It catalyses the reaction 7-aminomethyl-7-carbaguanine + guanosine(34) in tRNA = 7-aminomethyl-7-carbaguanosine(34) in tRNA + guanine. The protein operates within tRNA modification; tRNA-queuosine biosynthesis. Functionally, catalyzes the base-exchange of a guanine (G) residue with the queuine precursor 7-aminomethyl-7-deazaguanine (PreQ1) at position 34 (anticodon wobble position) in tRNAs with GU(N) anticodons (tRNA-Asp, -Asn, -His and -Tyr). Catalysis occurs through a double-displacement mechanism. The nucleophile active site attacks the C1' of nucleotide 34 to detach the guanine base from the RNA, forming a covalent enzyme-RNA intermediate. The proton acceptor active site deprotonates the incoming PreQ1, allowing a nucleophilic attack on the C1' of the ribose to form the product. After dissociation, two additional enzymatic reactions on the tRNA convert PreQ1 to queuine (Q), resulting in the hypermodified nucleoside queuosine (7-(((4,5-cis-dihydroxy-2-cyclopenten-1-yl)amino)methyl)-7-deazaguanosine). The sequence is that of Queuine tRNA-ribosyltransferase from Azoarcus sp. (strain BH72).